The following is a 225-amino-acid chain: Ribonuclease 3 (225 aa).

The RNase III domain occupies 7–129 (IPRLCRTLGY…IIGAIYLDSE (123 aa)). Glu-42 serves as a coordination point for Mg(2+). Residue Asp-46 is part of the active site. Positions 115 and 118 each coordinate Mg(2+). Glu-118 is a catalytic residue. The DRBM domain maps to 155–225 (DPKTLLQEHL…AAQVLELMKK (71 aa)).

The protein belongs to the ribonuclease III family. Homodimer. The cofactor is Mg(2+).

It is found in the cytoplasm. It carries out the reaction Endonucleolytic cleavage to 5'-phosphomonoester.. Its function is as follows. Digests double-stranded RNA. Involved in the processing of primary rRNA transcript to yield the immediate precursors to the large and small rRNAs (23S and 16S). Processes some mRNAs, and tRNAs when they are encoded in the rRNA operon. Processes pre-crRNA and tracrRNA of type II CRISPR loci if present in the organism. The polypeptide is Ribonuclease 3 (Shewanella halifaxensis (strain HAW-EB4)).